Here is a 734-residue protein sequence, read N- to C-terminus: Ribosomal RNA large subunit methyltransferase K/L (734 aa).

The region spanning 49-167 (HAYRICMWSR…KTEHTYCLDL (119 aa)) is the THUMP domain.

It belongs to the methyltransferase superfamily. RlmKL family.

The protein localises to the cytoplasm. It catalyses the reaction guanosine(2445) in 23S rRNA + S-adenosyl-L-methionine = N(2)-methylguanosine(2445) in 23S rRNA + S-adenosyl-L-homocysteine + H(+). It carries out the reaction guanosine(2069) in 23S rRNA + S-adenosyl-L-methionine = N(2)-methylguanosine(2069) in 23S rRNA + S-adenosyl-L-homocysteine + H(+). In terms of biological role, specifically methylates the guanine in position 2445 (m2G2445) and the guanine in position 2069 (m7G2069) of 23S rRNA. The protein is Ribosomal RNA large subunit methyltransferase K/L of Acinetobacter baumannii (strain AYE).